A 400-amino-acid chain; its full sequence is Phosphoglycerate kinase (400 aa).

Substrate is bound by residues 23 to 25 (DLN), Arg-38, 61 to 64 (HFGR), Arg-120, and Arg-153. Residues Lys-203, Glu-325, and 355-358 (GGDT) each bind ATP.

This sequence belongs to the phosphoglycerate kinase family. In terms of assembly, monomer.

The protein resides in the cytoplasm. It catalyses the reaction (2R)-3-phosphoglycerate + ATP = (2R)-3-phospho-glyceroyl phosphate + ADP. Its pathway is carbohydrate degradation; glycolysis; pyruvate from D-glyceraldehyde 3-phosphate: step 2/5. In Rhizobium leguminosarum bv. trifolii (strain WSM2304), this protein is Phosphoglycerate kinase.